The chain runs to 194 residues: ATP synthase subunit 5, mitochondrial (194 aa).

In terms of assembly, F-type ATP synthases have 2 components, the catalytic core F(1) and the membrane-embedded component F(0), linked together by a central stalk and a peripheral stalk. The central stalk, also called rotor shaft, is often seen as part of F(1). The peripheral stalk is seen as part of F(0). F(0) contains the membrane channel next to the rotor. F-type ATP synthases form dimers but each monomer functions independently in ATP generation. The dimer consists of 18 different polypeptides: ATP1 (subunit alpha, part of F(1), 3 molecules per monomer), ATP2 (subunit beta, part of F(1), 3 molecules per monomer), ATP3 (subunit gamma, part of the central stalk), ATP4 (subunit b, part of the peripheral stalk), ATP5/OSCP (subunit 5/OSCP, part of the peripheral stalk), ATP6 (subunit a, part of the peripheral stalk), ATP7 (subunit d, part of the peripheral stalk), ATP8 (subunit 8, part of the peripheral stalk), OLI1 (subunit c, part of the rotor, 10 molecules per monomer), ATP14 (subunit h, part of the peripheral stalk), ATP15 (subunit epsilon, part of the central stalk), ATP16 (subunit delta, part of the central stalk), ATP17 (subunit f, part of the peripheral stalk), ATP18 (subunit i/j, part of the peripheral stalk). Dimer-specific subunits are ATP19 (subunit k, at interface between monomers), ATP20 (subunit g, at interface between monomers), TIM11 (subunit e, at interface between monomers). Also contains subunit L.

It localises to the mitochondrion inner membrane. Mitochondrial membrane ATP synthase (F(1)F(0) ATP synthase or Complex V) produces ATP from ADP in the presence of a proton gradient across the membrane which is generated by electron transport complexes of the respiratory chain. F-type ATP synthases consist of two structural domains, F(1) - containing the extramembraneous catalytic core, and F(0) - containing the membrane proton channel, linked together by a central stalk and a peripheral stalk. During catalysis, ATP synthesis in the catalytic domain of F(1) is coupled via a rotary mechanism of the central stalk subunits to proton translocation. Part of the complex F(0) domain and the peripheral stalk, which acts as a stator to hold the catalytic alpha/ATP1(3)beta/ATP2(3) subcomplex and subunit a/ATP6 static relative to the rotary elements. The sequence is that of ATP synthase subunit 5, mitochondrial from Pichia angusta (Yeast).